Consider the following 475-residue polypeptide: Sulfate adenylyltransferase subunit 1 (475 aa).

A tr-type G domain is found at 25–239 (KSLLRFLTCG…EVLETVEIQR (215 aa)). A G1 region spans residues 34–41 (GSVDDGKS). Residue 34-41 (GSVDDGKS) participates in GTP binding. A G2 region spans residues 92–96 (GITID). Positions 113–116 (DTPG) are G3. Residues 113 to 117 (DTPGH) and 168 to 171 (NKMD) contribute to the GTP site. The G4 stretch occupies residues 168–171 (NKMD). A G5 region spans residues 206–208 (SAL).

This sequence belongs to the TRAFAC class translation factor GTPase superfamily. Classic translation factor GTPase family. CysN/NodQ subfamily. In terms of assembly, heterodimer composed of CysD, the smaller subunit, and CysN.

It carries out the reaction sulfate + ATP + H(+) = adenosine 5'-phosphosulfate + diphosphate. It participates in sulfur metabolism; hydrogen sulfide biosynthesis; sulfite from sulfate: step 1/3. With CysD forms the ATP sulfurylase (ATPS) that catalyzes the adenylation of sulfate producing adenosine 5'-phosphosulfate (APS) and diphosphate, the first enzymatic step in sulfur assimilation pathway. APS synthesis involves the formation of a high-energy phosphoric-sulfuric acid anhydride bond driven by GTP hydrolysis by CysN coupled to ATP hydrolysis by CysD. The chain is Sulfate adenylyltransferase subunit 1 from Escherichia fergusonii (strain ATCC 35469 / DSM 13698 / CCUG 18766 / IAM 14443 / JCM 21226 / LMG 7866 / NBRC 102419 / NCTC 12128 / CDC 0568-73).